A 114-amino-acid polypeptide reads, in one-letter code: Probable non-functional T cell receptor beta variable 5-3 (114 aa).

An N-terminal signal peptide occupies residues 1–21; it reads MGPGLLCWELLYLLGAGPVEA. The 93-residue stretch at 22–114 folds into the Ig-like domain; that stretch reads GVTQSPTHLI…SALYLCARSL (93 aa). C42 and C110 are oxidised to a cystine. N96 carries N-linked (GlcNAc...) asparagine glycosylation.

Alpha-beta TR is a heterodimer composed of an alpha and beta chain; disulfide-linked. The alpha-beta TR is associated with the transmembrane signaling CD3 coreceptor proteins to form the TR-CD3 (TcR or TCR). The assembly of alpha-beta TR heterodimers with CD3 occurs in the endoplasmic reticulum where a single alpha-beta TR heterodimer associates with one CD3D-CD3E heterodimer, one CD3G-CD3E heterodimer and one CD247 homodimer forming a stable octameric structure. CD3D-CD3E and CD3G-CD3E heterodimers preferentially associate with TR alpha and TR beta chains, respectively. The association of the CD247 homodimer is the last step of TcR assembly in the endoplasmic reticulum and is required for transport to the cell surface.

The protein resides in the cell membrane. Probable non-functional open reading frame (ORF) of V region of the variable domain of T cell receptor (TR) beta chain. Non-functional ORF generally cannot participate in the synthesis of a productive T cell receptor (TR) chain due to altered V-(D)-J or switch recombination and/or splicing site (at mRNA level) and/or conserved amino acid change (protein level). Alpha-beta T cell receptors are antigen specific receptors which are essential to the immune response and are present on the cell surface of T lymphocytes. Recognize peptide-major histocompatibility (MH) (pMH) complexes that are displayed by antigen presenting cells (APC), a prerequisite for efficient T cell adaptive immunity against pathogens. Binding of alpha-beta TR to pMH complex initiates TR-CD3 clustering on the cell surface and intracellular activation of LCK that phosphorylates the ITAM motifs of CD3G, CD3D, CD3E and CD247 enabling the recruitment of ZAP70. In turn ZAP70 phosphorylates LAT, which recruits numerous signaling molecules to form the LAT signalosome. The LAT signalosome propagates signal branching to three major signaling pathways, the calcium, the mitogen-activated protein kinase (MAPK) kinase and the nuclear factor NF-kappa-B (NF-kB) pathways, leading to the mobilization of transcription factors that are critical for gene expression and essential for T cell growth and differentiation. The T cell repertoire is generated in the thymus, by V-(D)-J rearrangement. This repertoire is then shaped by intrathymic selection events to generate a peripheral T cell pool of self-MH restricted, non-autoaggressive T cells. Post-thymic interaction of alpha-beta TR with the pMH complexes shapes TR structural and functional avidity. The protein is Probable non-functional T cell receptor beta variable 5-3 of Homo sapiens (Human).